The following is a 76-amino-acid chain: Putative snRNP Sm-like protein (76 aa).

The 73-residue stretch at 4–76 folds into the Sm domain; it reads RPLDVIHKSL…VLALSPVELE (73 aa).

It belongs to the snRNP Sm proteins family.

This is Putative snRNP Sm-like protein from Thermococcus kodakarensis (strain ATCC BAA-918 / JCM 12380 / KOD1) (Pyrococcus kodakaraensis (strain KOD1)).